Reading from the N-terminus, the 306-residue chain is tRNA dimethylallyltransferase (306 aa).

6-13 (GPTASGKS) provides a ligand contact to ATP. 8–13 (TASGKS) is a binding site for substrate.

This sequence belongs to the IPP transferase family. In terms of assembly, monomer. It depends on Mg(2+) as a cofactor.

It catalyses the reaction adenosine(37) in tRNA + dimethylallyl diphosphate = N(6)-dimethylallyladenosine(37) in tRNA + diphosphate. Its function is as follows. Catalyzes the transfer of a dimethylallyl group onto the adenine at position 37 in tRNAs that read codons beginning with uridine, leading to the formation of N6-(dimethylallyl)adenosine (i(6)A). This chain is tRNA dimethylallyltransferase, found in Sphingopyxis alaskensis (strain DSM 13593 / LMG 18877 / RB2256) (Sphingomonas alaskensis).